We begin with the raw amino-acid sequence, 426 residues long: Enolase (426 aa).

Phosphoenolpyruvate is bound at residue Gly41. Residue Ser43 coordinates Mg(2+). Glu165 lines the phosphoenolpyruvate pocket. 2 residues coordinate (2R)-2-phosphoglycerate: Glu165 and Glu206. The active-site Proton donor is Glu206. Mg(2+) is bound by residues Asp243, Glu286, and Asp313. Phosphoenolpyruvate-binding residues include Asp313, Lys338, Arg367, Ser368, and Lys389. Positions 338, 367, and 368 each coordinate (2R)-2-phosphoglycerate. Lys338 (proton acceptor) is an active-site residue.

The protein belongs to the enolase family. Homodimer. Mg(2+) serves as cofactor.

Its subcellular location is the cytoplasm. The protein resides in the secreted. It is found in the cell surface. The enzyme catalyses (2R)-2-phosphoglycerate = phosphoenolpyruvate + H2O. The protein operates within carbohydrate degradation; glycolysis; pyruvate from D-glyceraldehyde 3-phosphate: step 4/5. Catalyzes the reversible conversion of 2-phosphoglycerate (2-PG) into phosphoenolpyruvate (PEP). It is essential for the degradation of carbohydrates via glycolysis. The protein is Enolase of Chloroflexus aurantiacus (strain ATCC 29366 / DSM 635 / J-10-fl).